The chain runs to 256 residues: Alcohol dehydrogenase (256 aa).

12–35 is a binding site for NAD(+); the sequence is FVAGLGGIGLDTSKELVKRDLKNL. Serine 140 provides a ligand contact to substrate. Tyrosine 153 functions as the Proton acceptor in the catalytic mechanism.

This sequence belongs to the short-chain dehydrogenases/reductases (SDR) family. In terms of assembly, homodimer.

The enzyme catalyses a primary alcohol + NAD(+) = an aldehyde + NADH + H(+). It carries out the reaction a secondary alcohol + NAD(+) = a ketone + NADH + H(+). This is Alcohol dehydrogenase (Adh) from Drosophila teissieri (Fruit fly).